We begin with the raw amino-acid sequence, 214 residues long: Cutinase CUT2 (214 aa).

A signal peptide spans 1 to 18 (MQFSLSIATAILAATASA). A disulfide bridge links Cys40 with Cys117. The Nucleophile role is filled by Ser128. The cysteines at positions 179 and 186 are disulfide-linked. Asp183 is an active-site residue. His196 acts as the Proton donor/acceptor in catalysis.

The protein belongs to the cutinase family. Post-translationally, the 2 disulfide bonds play a critical role in holding the catalytic residues in juxta-position; reduction of the disulfide bridges results in the complete inactivation of the enzyme.

The protein localises to the secreted. It catalyses the reaction cutin + H2O = cutin monomers.. Functionally, catalyzes the hydrolysis of complex carboxylic polyesters found in the cell wall of plants. Degrades cutin, a macromolecule that forms the structure of the plant cuticle. Required for efficient penetration of the host plant cuticle by the appressorium during the initial stage of fungal infection. The chain is Cutinase CUT2 from Pyricularia oryzae (strain 70-15 / ATCC MYA-4617 / FGSC 8958) (Rice blast fungus).